The sequence spans 389 residues: Alkanesulfonate monooxygenase (389 aa).

It belongs to the SsuD family.

The catalysed reaction is an alkanesulfonate + FMNH2 + O2 = an aldehyde + FMN + sulfite + H2O + 2 H(+). In terms of biological role, catalyzes the desulfonation of aliphatic sulfonates. The polypeptide is Alkanesulfonate monooxygenase (Rhizobium etli (strain CIAT 652)).